The sequence spans 194 residues: MRACVLVHVLTMVGFALGKAPVASVRTCHLCFLEDPSIGCISGSEKCTISSSSPCMVITIYQNVKVRFHVRGCGQHHSFRCQENHVIYYSDYWYRVNCCQYDYCNSWSSAQHQSTLPGPPGNHLGVPLSESQIKQFYQALHLPLFQPDLHTHKVSEGPDSLILPPGLGLSIADLRKIYLFLNSSGLLVLPQARP.

An N-terminal signal peptide occupies residues 1-18; it reads MRACVLVHVLTMVGFALG. Residues 26–118 form the UPAR/Ly6 domain; that stretch reads RTCHLCFLED…SAQHQSTLPG (93 aa). 5 disulfides stabilise this stretch: Cys-28–Cys-55, Cys-31–Cys-40, Cys-47–Cys-73, Cys-81–Cys-98, and Cys-99–Cys-104. N-linked (GlcNAc...) asparagine glycosylation occurs at Asn-182.

In terms of processing, N-glycosylated.

The protein resides in the secreted. The chain is Lymphocyte antigen 6 complex locus protein G5b (Ly6g5b) from Rattus norvegicus (Rat).